Consider the following 632-residue polypeptide: Probable potassium transport system protein Kup 2 (632 aa).

12 helical membrane passes run 19–39 (FWGL…TSPL), 58–78 (MIVL…VTAK), 110–130 (MFLM…SMIT), 147–167 (PALE…LFAV), 178–198 (AFGP…IVHI), 216–236 (FLLS…LAVT), 257–277 (WLFF…ALVL), 290–310 (MVPE…TVIA), 347–367 (IYLP…VLLF), 377–397 (YGIA…VVIW), 404–424 (AAVA…FFSA), and 429–449 (LFEG…TIWT).

It belongs to the HAK/KUP transporter (TC 2.A.72) family.

It localises to the cell inner membrane. It carries out the reaction K(+)(in) + H(+)(in) = K(+)(out) + H(+)(out). Functionally, transport of potassium into the cell. Likely operates as a K(+):H(+) symporter. This is Probable potassium transport system protein Kup 2 from Bradyrhizobium sp. (strain BTAi1 / ATCC BAA-1182).